A 479-amino-acid polypeptide reads, in one-letter code: FAD-dependent monooxygenase cdmI (479 aa).

FAD is bound by residues Glu-43, Gly-57, and Arg-116. 2 N-linked (GlcNAc...) asparagine glycosylation sites follow: Asn-156 and Asn-198. FAD is bound by residues Asp-315 and Ala-328. A helical transmembrane segment spans residues 453-473 (PFILAVLAGLGFLLTMFKQQW).

It belongs to the paxM FAD-dependent monooxygenase family. The cofactor is FAD.

The protein localises to the membrane. The catalysed reaction is verruculide C + AH2 + O2 = verruculide C epoxide + A + H2O. It functions in the pathway secondary metabolite biosynthesis; terpenoid biosynthesis. FAD-dependent monooxygenase; part of the gene cluster that mediates the biosynthesis of chrodrimanin B, a meroterpenoid that acts as a potent blocker of insect GABA-gated chloride channels. The first step of the pathway is the biosynthesis of 6-hydroxymellein by the polyketide synthase cdmE. The prenyltransferase cdmH acts as a 6-hydroxymellein 5-farnesyltransferase and produces the hydrophobic metabolite verruculide C. The FAD-dependent monooxygenase cdmI further converts verruculide C into verruculide B. The terpene cyclase cdmG then produced the pentacyclic molecule 3-hydroxypentacecilide A, the backbone structure of chrodrimanin B, via folding the farnesyl moiety of the substrate into the chair-boat conformation. The short-chain dehydrogenase/reductase cdmF functions as the 3-OH dehydrogenase that oxidizes the C-3 hydroxyl group of 3-hydroxypentacecilide A and produces chrodrimanin C, the dehydrogenated product of 3-hydroxypentacecilide A. The cytochrome P450 monooxygenase cdmJ then accepts both 3-hydroxypentacecilide A and chrodrimanin C and functions as a C-7-beta-hydroxylase to produce respectively chrodrimanin H and chrodrimanin F. The dioxygenase cdmA accepts chrodrimanin H to afford chrodrimanin E, which is further transformed to chrodrimanin A by the dioxygenase cdmD. CdmA can also accept chrodrimanin C as substrate to convert it into verruculide A, which is further converted into chrodrimanin T by cdmD. The last step of the biosynthesis is proposed to be performed by the acetyltransferase cdmC which acetylates chrodrimanin A to yield chrodrimanin B. The pathway may also lead to the production of additional shunt products, including chrodrimanins T and U. The protein is FAD-dependent monooxygenase cdmI of Talaromyces verruculosus (Penicillium verruculosum).